The chain runs to 88 residues: Small ribosomal subunit protein uS17 (88 aa).

The protein belongs to the universal ribosomal protein uS17 family. In terms of assembly, part of the 30S ribosomal subunit.

In terms of biological role, one of the primary rRNA binding proteins, it binds specifically to the 5'-end of 16S ribosomal RNA. The sequence is that of Small ribosomal subunit protein uS17 from Maridesulfovibrio salexigens (strain ATCC 14822 / DSM 2638 / NCIMB 8403 / VKM B-1763) (Desulfovibrio salexigens).